We begin with the raw amino-acid sequence, 433 residues long: Homoserine dehydrogenase (433 aa).

Residues Thr-13 and Val-14 each coordinate NADPH. The NAD(+) site is built by Val-14 and Val-33. An NADP(+)-binding site is contributed by Val-14. Residues Lys-45 and Lys-105 each coordinate NADPH. Residues Lys-45 and Lys-105 each contribute to the NADP(+) site. Residues Glu-129, Val-132, Gly-134, and Ile-136 each coordinate Na(+). NADP(+) is bound by residues Gly-187 and Glu-190. Residues Glu-190 and Asp-201 each contribute to the L-homoserine site. Lys-205 acts as the Proton donor in catalysis. Position 302 (Gly-302) interacts with NADPH. Gly-302 lines the NAD(+) pocket. Residue Gly-302 coordinates NADP(+). An ACT domain is found at 350 to 426; it reads FLRIHVKDEV…VVQEVKSTYR (77 aa).

It belongs to the homoserine dehydrogenase family. As to quaternary structure, homotetramer. Requires a metal cation as cofactor.

The protein resides in the cytoplasm. It is found in the secreted. The enzyme catalyses L-homoserine + NADP(+) = L-aspartate 4-semialdehyde + NADPH + H(+). It functions in the pathway amino-acid biosynthesis; L-methionine biosynthesis via de novo pathway; L-homoserine from L-aspartate: step 3/3. The protein operates within amino-acid biosynthesis; L-threonine biosynthesis; L-threonine from L-aspartate: step 3/5. With respect to regulation, feedback inhibition by threonine. Activated by sodium ions. In terms of biological role, catalyzes the conversion of L-aspartate-beta-semialdehyde (L-Asa) to L-homoserine (L-Hse), the third step in the biosynthesis of threonine and methionine from aspartate. Utilizes NADPH but not NADH as coenzyme. In Bacillus subtilis (strain 168), this protein is Homoserine dehydrogenase (hom).